The following is a 343-amino-acid chain: 4-hydroxy-2-oxovalerate aldolase (343 aa).

Residues 4-254 enclose the Pyruvate carboxyltransferase domain; sequence PRLTDTTLRD…NPGLDVFSLM (251 aa). Residue 12-13 coordinates substrate; that stretch reads RD. Asp13 contributes to the Mn(2+) binding site. The active-site Proton acceptor is His16. 2 residues coordinate substrate: Ser166 and His193. His193 and His195 together coordinate Mn(2+). Residue Tyr284 coordinates substrate.

It belongs to the 4-hydroxy-2-oxovalerate aldolase family.

The enzyme catalyses (S)-4-hydroxy-2-oxopentanoate = acetaldehyde + pyruvate. The chain is 4-hydroxy-2-oxovalerate aldolase from Chloroflexus aurantiacus (strain ATCC 29364 / DSM 637 / Y-400-fl).